We begin with the raw amino-acid sequence, 367 residues long: Gibberellin 20 oxidase 3 (367 aa).

The region spanning 198-304 is the Fe2OG dioxygenase domain; the sequence is DGDPVMRLNH…RRSLTFFLNP (107 aa). Tyrosine 208 is a binding site for 2-oxoglutarate. Fe cation is bound by residues histidine 223, aspartate 225, and histidine 285. The 2-oxoglutarate site is built by arginine 295 and serine 297.

The protein belongs to the iron/ascorbate-dependent oxidoreductase family. Requires Fe(2+) as cofactor. L-ascorbate is required as a cofactor.

The enzyme catalyses gibberellin A12 + 2 2-oxoglutarate + 3 O2 + H(+) = gibberellin A9 + 2 succinate + 3 CO2 + 2 H2O. The catalysed reaction is gibberellin A53 + 2 2-oxoglutarate + 3 O2 + H(+) = gibberellin A20 + 2 succinate + 3 CO2 + 2 H2O. In terms of biological role, key oxidase enzyme in the biosynthesis of gibberellin. Catalyzes the formation of bioactive gibberellins (GAs) via a three-step oxidation at C-20 of the GA skeleton. Controls the elongation of the vegetative shoot and plant height by the regulation of active gibberellin levels. This is Gibberellin 20 oxidase 3 from Oryza sativa subsp. japonica (Rice).